Here is a 77-residue protein sequence, read N- to C-terminus: Large ribosomal subunit protein bL28 (77 aa).

Positions 1–26 are disordered; that stretch reads MARVCKVTGKRPMSGNNVSHANNKTK.

Belongs to the bacterial ribosomal protein bL28 family.

This is Large ribosomal subunit protein bL28 from Neisseria gonorrhoeae (strain ATCC 700825 / FA 1090).